A 166-amino-acid polypeptide reads, in one-letter code: Putative universal stress protein SA1532 (166 aa).

This sequence belongs to the universal stress protein A family.

The protein localises to the cytoplasm. The sequence is that of Putative universal stress protein SA1532 from Staphylococcus aureus (strain N315).